A 207-amino-acid chain; its full sequence is Suppressor of IKBKE 1 (207 aa).

2 coiled-coil regions span residues 4–32 (TIDK…LIDQ) and 154–193 (DAIQ…SLHS). The disordered stretch occupies residues 186-207 (TSKESLHSSKRESEWNFSEKTQ). Residues 189-199 (ESLHSSKRESE) are compositionally biased toward basic and acidic residues.

Belongs to the SIKE family. In terms of assembly, interacts with IKBKE and TBK1 via its coiled coil region. Interaction with TBK1 is disrupted upon viral infection or TLR3 stimulation. Interacts with CDC42BPB. Associates with the STRIPAK core complex composed of PP2A catalytic and scaffolding subunits, the striatins (PP2A regulatory subunits), the striatin-associated proteins MOB4, STRIP1 and STRIP2, PDCD10 and members of the STE20 kinases, such as STK24 and STK26.

Suppressor of IKK-epsilon. Associates with the striatin-interacting phosphatase and kinase (STRIPAK) core complex, forming the extended (SIKE1:SLMAP)STRIPAK complex. The (SIKE1:SLMAP)STRIPAK complex dephosphorylates STK3 leading to the inhibition of Hippo signaling and the control of cell growth. This is Suppressor of IKBKE 1 (sike1) from Xenopus tropicalis (Western clawed frog).